We begin with the raw amino-acid sequence, 356 residues long: Neurogenic differentiation factor 1 (356 aa).

Positions 1-94 are disordered; the sequence is MTKSYSESGL…GPKKKKMTKA (94 aa). Residues 58-78 show a composition bias toward acidic residues; it reads EEEDEDEDLEEEEEEEEEDDD. Positions 81–93 are enriched in basic residues; that stretch reads PKRRGPKKKKMTK. The short motif at 87–93 is the Nuclear localization signal element; sequence KKKKMTK. The bHLH domain maps to 101–153; sequence LRRMKANARERNRMHGLNAALDNLRKVVPCYSKTQKLSKIETLRLAKNYIWAL. 4 positions are modified to phosphoserine: serine 162, serine 259, serine 266, and serine 274. At serine 335 the chain carries Phosphoserine; by CaMK2.

Efficient DNA-binding requires dimerization with another bHLH protein. Heterodimer with TCF3/E47; the heterodimer is inhibited in presence of ID2, but not NR0B2, to E-box element. Interacts with EP300; the interaction is inhibited by NR0B2. Interacts with RREB1. Interacts with ATOH8. Phosphorylated. In islet cells, phosphorylated on Ser-274 upon glucose stimulation; which may be required for nuclear localization. In activated neurons, phosphorylated on Ser-335; which promotes dendritic growth. Phosphorylated by MAPK1; phosphorylation regulates heterodimerization and DNA-binding activities. Phosphorylation on Ser-266 and Ser-274 increases transactivation on the insulin promoter in glucose-stimulated insulinoma cells.

It localises to the cytoplasm. The protein localises to the nucleus. Acts as a transcriptional activator: mediates transcriptional activation by binding to E box-containing promoter consensus core sequences 5'-CANNTG-3'. Associates with the p300/CBP transcription coactivator complex to stimulate transcription of the secretin gene as well as the gene encoding the cyclin-dependent kinase inhibitor CDKN1A. Contributes to the regulation of several cell differentiation pathways, like those that promote the formation of early retinal ganglion cells, inner ear sensory neurons, granule cells forming either the cerebellum or the dentate gyrus cell layer of the hippocampus, endocrine islet cells of the pancreas and enteroendocrine cells of the small intestine. Together with PAX6 or SIX3, is required for the regulation of amacrine cell fate specification. Also required for dendrite morphogenesis and maintenance in the cerebellar cortex. Associates with chromatin to enhancer regulatory elements in genes encoding key transcriptional regulators of neurogenesis. The protein is Neurogenic differentiation factor 1 (NEUROD1) of Homo sapiens (Human).